A 276-amino-acid chain; its full sequence is Dermonecrotic toxin LspiSicTox-betaIE4ii (276 aa).

The active site involves His5. The Mg(2+) site is built by Glu25 and Asp27. Catalysis depends on His41, which acts as the Nucleophile. 2 disulfide bridges follow: Cys45–Cys51 and Cys47–Cys189. Residue Asp85 coordinates Mg(2+).

This sequence belongs to the arthropod phospholipase D family. Class II subfamily. Mg(2+) serves as cofactor. As to expression, expressed by the venom gland.

It is found in the secreted. It catalyses the reaction an N-(acyl)-sphingosylphosphocholine = an N-(acyl)-sphingosyl-1,3-cyclic phosphate + choline. The enzyme catalyses an N-(acyl)-sphingosylphosphoethanolamine = an N-(acyl)-sphingosyl-1,3-cyclic phosphate + ethanolamine. It carries out the reaction a 1-acyl-sn-glycero-3-phosphocholine = a 1-acyl-sn-glycero-2,3-cyclic phosphate + choline. The catalysed reaction is a 1-acyl-sn-glycero-3-phosphoethanolamine = a 1-acyl-sn-glycero-2,3-cyclic phosphate + ethanolamine. Dermonecrotic toxins cleave the phosphodiester linkage between the phosphate and headgroup of certain phospholipids (sphingolipid and lysolipid substrates), forming an alcohol (often choline) and a cyclic phosphate. This toxin acts on sphingomyelin (SM). It may also act on ceramide phosphoethanolamine (CPE), lysophosphatidylcholine (LPC) and lysophosphatidylethanolamine (LPE), but not on lysophosphatidylserine (LPS), and lysophosphatidylglycerol (LPG). It acts by transphosphatidylation, releasing exclusively cyclic phosphate products as second products. Induces dermonecrosis, hemolysis, increased vascular permeability, edema, inflammatory response, and platelet aggregation. This Loxosceles spinulosa (Recluse spider) protein is Dermonecrotic toxin LspiSicTox-betaIE4ii.